The following is a 212-amino-acid chain: ATP phosphoribosyltransferase (212 aa).

It belongs to the ATP phosphoribosyltransferase family. Short subfamily. In terms of assembly, heteromultimer composed of HisG and HisZ subunits.

Its subcellular location is the cytoplasm. It catalyses the reaction 1-(5-phospho-beta-D-ribosyl)-ATP + diphosphate = 5-phospho-alpha-D-ribose 1-diphosphate + ATP. Its pathway is amino-acid biosynthesis; L-histidine biosynthesis; L-histidine from 5-phospho-alpha-D-ribose 1-diphosphate: step 1/9. Catalyzes the condensation of ATP and 5-phosphoribose 1-diphosphate to form N'-(5'-phosphoribosyl)-ATP (PR-ATP). Has a crucial role in the pathway because the rate of histidine biosynthesis seems to be controlled primarily by regulation of HisG enzymatic activity. The sequence is that of ATP phosphoribosyltransferase from Prochlorococcus marinus (strain MIT 9312).